The sequence spans 465 residues: Crh-like protein ARB_05253 (465 aa).

The signal sequence occupies residues methionine 1–threonine 21. A GH16 domain is found at glutamate 22 to lysine 223. A disulfide bridge connects residues cysteine 23 and cysteine 30. Glutamate 114 (nucleophile) is an active-site residue. Glutamate 118 functions as the Proton donor in the catalytic mechanism. Residues glutamate 118, tryptophan 200, and threonine 211 each coordinate chitin. Disordered regions lie at residues glycine 261–threonine 325 and threonine 339–threonine 442. An N-linked (GlcNAc...) asparagine glycan is attached at asparagine 264. A compositionally biased stretch (low complexity) spans serine 277 to serine 287. The span at glutamine 304–threonine 325 shows a compositional bias: polar residues. Composition is skewed to low complexity over residues threonine 339 to threonine 348, threonine 361 to serine 376, and methionine 383 to glycine 397. Serine 441 carries GPI-anchor amidated serine lipidation. Residues threonine 442 to valine 465 constitute a propeptide, removed in mature form.

Belongs to the glycosyl hydrolase 16 family. CRH1 subfamily. In terms of processing, the GPI-anchor is attached to the protein in the endoplasmic reticulum and serves to target the protein to the cell surface. There, the glucosamine-inositol phospholipid moiety is cleaved off and the GPI-modified mannoprotein is covalently attached via its lipidless GPI glycan remnant to the 1,6-beta-glucan of the outer cell wall layer.

It localises to the secreted. Its subcellular location is the cell wall. The protein resides in the membrane. The catalysed reaction is Random endo-hydrolysis of N-acetyl-beta-D-glucosaminide (1-&gt;4)-beta-linkages in chitin and chitodextrins.. Dual chitinase/transglycosylase that plays a role in cell wall architecture. Chitinase and transglycosylase activities are coupled. Required for the polysaccharide cross-linking at the septa and the cell wall. More specifically, transfers chitin to 1,6-beta-glucan in the cell wall. The protein is Crh-like protein ARB_05253 of Arthroderma benhamiae (strain ATCC MYA-4681 / CBS 112371) (Trichophyton mentagrophytes).